Consider the following 326-residue polypeptide: Aspartate carbamoyltransferase catalytic subunit (326 aa).

Residues arginine 58 and threonine 59 each coordinate carbamoyl phosphate. Lysine 86 contributes to the L-aspartate binding site. 3 residues coordinate carbamoyl phosphate: arginine 108, histidine 141, and glutamine 144. The L-aspartate site is built by arginine 181 and arginine 239. Residues glycine 280 and proline 281 each contribute to the carbamoyl phosphate site.

This sequence belongs to the aspartate/ornithine carbamoyltransferase superfamily. ATCase family. Heterododecamer (2C3:3R2) of six catalytic PyrB chains organized as two trimers (C3), and six regulatory PyrI chains organized as three dimers (R2).

The enzyme catalyses carbamoyl phosphate + L-aspartate = N-carbamoyl-L-aspartate + phosphate + H(+). It participates in pyrimidine metabolism; UMP biosynthesis via de novo pathway; (S)-dihydroorotate from bicarbonate: step 2/3. Its function is as follows. Catalyzes the condensation of carbamoyl phosphate and aspartate to form carbamoyl aspartate and inorganic phosphate, the committed step in the de novo pyrimidine nucleotide biosynthesis pathway. The chain is Aspartate carbamoyltransferase catalytic subunit from Synechococcus sp. (strain JA-2-3B'a(2-13)) (Cyanobacteria bacterium Yellowstone B-Prime).